The following is a 338-amino-acid chain: ABC transporter I family member 6, chloroplastic (338 aa).

Residues 1 to 66 (MAGVNLQLRH…RTTRRSVIVS (66 aa)) constitute a chloroplast transit peptide. In terms of domain architecture, ABC transporter spans 92-338 (LEVRDLRAVI…EKEGYKAISG (247 aa)). Residue 126 to 133 (GKNGSGKS) participates in ATP binding.

This sequence belongs to the ABC transporter superfamily. ABCI family. As to quaternary structure, interacts with NAP6. Present in all organs, with higher levels in aerial parts.

The protein localises to the plastid. It localises to the chloroplast. Essential protein. Required during embryo development, especially at early stages. Involved in chloroplast differentiation. The polypeptide is ABC transporter I family member 6, chloroplastic (ABCI6) (Arabidopsis thaliana (Mouse-ear cress)).